Consider the following 1172-residue polypeptide: Short transient receptor potential channel 2 (1172 aa).

Residues 1–10 (MLMSRTDSKS) show a composition bias toward basic and acidic residues. Disordered regions lie at residues 1–22 (MLMS…MFKD), 69–98 (VVDP…WLTN), 140–227 (SAAR…GGVQ), and 249–271 (ATCG…SESV). Topologically, residues 1 to 659 (MLMSRTDSKS…PKSQLGRLLK (659 aa)) are cytoplasmic. A compositionally biased stretch (polar residues) spans 75 to 87 (PGSSGLNQNSTDV). The span at 166–177 (ESAEPRAEEPNR) shows a compositional bias: basic and acidic residues. Over residues 195-204 (SLSNSSSQPN) the composition is skewed to polar residues. A compositionally biased stretch (basic residues) spans 206–218 (RTGRTRQRQHRPQ). Low complexity predominate over residues 261 to 270 (SPASLSSSES). ANK repeat units lie at residues 301-330 (KFPP…DASG), 377-406 (QIHE…REKG), and 430-459 (PGVT…TIAR). A helical membrane pass occupies residues 660–680 (IPVLKFLLHSASYLWFLIFLL). Residues 681–702 (GESLVMETQLSTFKGRSQSVWE) are Extracellular-facing. A helical transmembrane segment spans residues 703–723 (TSLHMIWVTGFLWFECKEVWI). Over 724–738 (EGLRSYLLDWWNFLD) the chain is Cytoplasmic. The helical transmembrane segment at 739–759 (VVILSLYLASFALRLLLAGLA) threads the bilayer. At 760 to 789 (YMHCRDASDSTTCRYFTTAERSEWRTEDPQ) the chain is on the extracellular side. The helical transmembrane segment at 790-810 (FLAEVLFAVTSMLSFTRLAYI) threads the bilayer. Residues 811-833 (LPAHESLGTLQISIGKMIDDMIR) are Cytoplasmic-facing. The chain crosses the membrane as a helical span at residues 834–854 (FMFILMIILTAFLCGLNNIYV). At 855-899 (PYQESEKLGNFNETFQFLFWTMFGMEEHTVVDMPQFLVPEFVGRA) the chain is on the extracellular side. A helical membrane pass occupies residues 900–920 (MYGIFTIVMVIVLLNMLIAMI). Topologically, residues 921 to 1172 (TNSFQKIEDD…EGDLETKGES (252 aa)) are cytoplasmic. A disordered region spans residues 1118 to 1172 (VSLGDGLDGTGEAGAPAPGEPGSSSSAHVLVHREQEAEGSGDLLLEGDLETKGES). Low complexity predominate over residues 1130-1144 (AGAPAPGEPGSSSSA).

Belongs to the transient receptor (TC 1.A.4) family. STrpC subfamily. TRPC2 sub-subfamily. In terms of tissue distribution, isoform 3 is ubiquitously expressed at low levels. Isoform 4 is expressed exclusively in vomeronasal organ.

It localises to the membrane. Its function is as follows. Thought to form a receptor-activated non-selective calcium permeant cation channel. Probably is operated by a phosphatidylinositol second messenger system activated by receptor tyrosine kinases or G-protein coupled receptors. May also be activated by intracellular calcium store depletion. Plays a role in mediating responsivity to pheromones that elicit aggressive and mating behaviors. Required for response to the Esp1 pheromone which enhances female sexual receptive behavior and to the Esp22 pheromone which inhibits adult male mating behavior. The protein is Short transient receptor potential channel 2 (Trpc2) of Mus musculus (Mouse).